A 150-amino-acid polypeptide reads, in one-letter code: UPF0735 ACT domain-containing protein DSY2247 (150 aa).

The ACT domain maps to 74–149 (TFSLTLENTA…GVRKIEVIGQ (76 aa)).

This sequence belongs to the UPF0735 family.

This chain is UPF0735 ACT domain-containing protein DSY2247, found in Desulfitobacterium hafniense (strain Y51).